The primary structure comprises 415 residues: Histidine--tRNA ligase (415 aa).

Belongs to the class-II aminoacyl-tRNA synthetase family. In terms of assembly, homodimer.

The protein localises to the cytoplasm. The catalysed reaction is tRNA(His) + L-histidine + ATP = L-histidyl-tRNA(His) + AMP + diphosphate + H(+). The polypeptide is Histidine--tRNA ligase (Gluconobacter oxydans (strain 621H) (Gluconobacter suboxydans)).